We begin with the raw amino-acid sequence, 219 residues long: 7-cyano-7-deazaguanine synthase (219 aa).

10–20 (FSGGQDSTTCL) is an ATP binding site. Zn(2+) contacts are provided by C188, C196, C199, and C202.

The protein belongs to the QueC family. Zn(2+) serves as cofactor.

The catalysed reaction is 7-carboxy-7-deazaguanine + NH4(+) + ATP = 7-cyano-7-deazaguanine + ADP + phosphate + H2O + H(+). It participates in purine metabolism; 7-cyano-7-deazaguanine biosynthesis. Its function is as follows. Catalyzes the ATP-dependent conversion of 7-carboxy-7-deazaguanine (CDG) to 7-cyano-7-deazaguanine (preQ(0)). This is 7-cyano-7-deazaguanine synthase from Neisseria meningitidis serogroup C / serotype 2a (strain ATCC 700532 / DSM 15464 / FAM18).